The chain runs to 210 residues: MLTIAIPKGGLLPEAIALLQQVGLDFSAFLDKKNRQLQITDPTGTARAMLVRTHDVPVYVEYGQAQLGFAGYDVLREKKPDVANLLDLGFGGCRLSVAVPKASPYKNPRQLPPNCRVASKFVNCAKDYFRDLDLPIEVIPLHGSVELGPITGMSEAIVDLVSTGNTLRENNLEEVEVLFHSTVRLIAHPTSYRANRHNMLDWVQKLEQIL.

It belongs to the ATP phosphoribosyltransferase family. Short subfamily. As to quaternary structure, heteromultimer composed of HisG and HisZ subunits.

Its subcellular location is the cytoplasm. The catalysed reaction is 1-(5-phospho-beta-D-ribosyl)-ATP + diphosphate = 5-phospho-alpha-D-ribose 1-diphosphate + ATP. Its pathway is amino-acid biosynthesis; L-histidine biosynthesis; L-histidine from 5-phospho-alpha-D-ribose 1-diphosphate: step 1/9. Functionally, catalyzes the condensation of ATP and 5-phosphoribose 1-diphosphate to form N'-(5'-phosphoribosyl)-ATP (PR-ATP). Has a crucial role in the pathway because the rate of histidine biosynthesis seems to be controlled primarily by regulation of HisG enzymatic activity. The chain is ATP phosphoribosyltransferase from Picosynechococcus sp. (strain ATCC 27264 / PCC 7002 / PR-6) (Agmenellum quadruplicatum).